Reading from the N-terminus, the 163-residue chain is Mediator of RNA polymerase II transcription subunit 10 (163 aa).

Residues 57-79 (AAPDPSYVQSPPSRTGLSPADPP) form a disordered region. Over residues 63 to 72 (YVQSPPSRTG) the composition is skewed to polar residues.

It belongs to the Mediator complex subunit 10 family. Component of the Mediator complex.

It localises to the nucleus. Its function is as follows. Component of the Mediator complex, a coactivator involved in the regulated transcription of nearly all RNA polymerase II-dependent genes. Mediator functions as a bridge to convey information from gene-specific regulatory proteins to the basal RNA polymerase II transcription machinery. Mediator is recruited to promoters by direct interactions with regulatory proteins and serves as a scaffold for the assembly of a functional preinitiation complex with RNA polymerase II and the general transcription factors. The chain is Mediator of RNA polymerase II transcription subunit 10 (NUT2) from Coccidioides immitis (strain RS) (Valley fever fungus).